The chain runs to 77 residues: Acyl carrier protein (77 aa).

In terms of domain architecture, Carrier spans 2–77; sequence STIEERVKKI…EAIDYVVSHQ (76 aa). S37 is modified (O-(pantetheine 4'-phosphoryl)serine).

This sequence belongs to the acyl carrier protein (ACP) family. 4'-phosphopantetheine is transferred from CoA to a specific serine of apo-ACP by AcpS. This modification is essential for activity because fatty acids are bound in thioester linkage to the sulfhydryl of the prosthetic group.

The protein resides in the cytoplasm. It functions in the pathway lipid metabolism; fatty acid biosynthesis. In terms of biological role, carrier of the growing fatty acid chain in fatty acid biosynthesis. The sequence is that of Acyl carrier protein from Oceanospirillum linum.